Here is a 396-residue protein sequence, read N- to C-terminus: Elongation factor Tu 2 (396 aa).

In terms of domain architecture, tr-type G spans Lys10–Glu206. The G1 stretch occupies residues Gly19–Thr26. Residue Gly19–Thr26 coordinates GTP. Residue Thr26 coordinates Mg(2+). Residues Gly60 to Asn64 are G2. Residues Asp81–Gly84 form a G3 region. Residues Asp81–His85 and Asn136–Asp139 contribute to the GTP site. The interval Asn136–Asp139 is G4. Residues Ser174–Leu176 form a G5 region.

It belongs to the TRAFAC class translation factor GTPase superfamily. Classic translation factor GTPase family. EF-Tu/EF-1A subfamily. In terms of assembly, monomer.

It is found in the cytoplasm. The catalysed reaction is GTP + H2O = GDP + phosphate + H(+). Functionally, GTP hydrolase that promotes the GTP-dependent binding of aminoacyl-tRNA to the A-site of ribosomes during protein biosynthesis. This chain is Elongation factor Tu 2, found in Hyphomonas neptunium (strain ATCC 15444).